A 357-amino-acid polypeptide reads, in one-letter code: Peptide chain release factor 1 (357 aa).

Gln236 is subject to N5-methylglutamine.

The protein belongs to the prokaryotic/mitochondrial release factor family. Methylated by PrmC. Methylation increases the termination efficiency of RF1.

The protein resides in the cytoplasm. Its function is as follows. Peptide chain release factor 1 directs the termination of translation in response to the peptide chain termination codons UAG and UAA. In Mycolicibacterium paratuberculosis (strain ATCC BAA-968 / K-10) (Mycobacterium paratuberculosis), this protein is Peptide chain release factor 1.